Here is a 341-residue protein sequence, read N- to C-terminus: Elongation factor Ts (341 aa).

The involved in Mg(2+) ion dislocation from EF-Tu stretch occupies residues 80-83; the sequence is TDFV.

It belongs to the EF-Ts family.

It localises to the cytoplasm. Associates with the EF-Tu.GDP complex and induces the exchange of GDP to GTP. It remains bound to the aminoacyl-tRNA.EF-Tu.GTP complex up to the GTP hydrolysis stage on the ribosome. The sequence is that of Elongation factor Ts from Lactobacillus helveticus (strain DPC 4571).